A 265-amino-acid chain; its full sequence is Triosephosphate isomerase (265 aa).

Substrate is bound at residue N13–K15. The Electrophile role is filled by H106. Catalysis depends on E179, which acts as the Proton acceptor. Substrate contacts are provided by residues G185, S223, and G244–G245.

The protein belongs to the triosephosphate isomerase family. As to quaternary structure, homodimer.

It localises to the cytoplasm. It carries out the reaction D-glyceraldehyde 3-phosphate = dihydroxyacetone phosphate. It functions in the pathway carbohydrate biosynthesis; gluconeogenesis. The protein operates within carbohydrate degradation; glycolysis; D-glyceraldehyde 3-phosphate from glycerone phosphate: step 1/1. Its function is as follows. Involved in the gluconeogenesis. Catalyzes stereospecifically the conversion of dihydroxyacetone phosphate (DHAP) to D-glyceraldehyde-3-phosphate (G3P). This Acinetobacter baylyi (strain ATCC 33305 / BD413 / ADP1) protein is Triosephosphate isomerase.